The sequence spans 207 residues: FMN-dependent NADH:quinone oxidoreductase (207 aa).

Residue S10 coordinates FMN.

It belongs to the azoreductase type 1 family. As to quaternary structure, homodimer. It depends on FMN as a cofactor.

The catalysed reaction is 2 a quinone + NADH + H(+) = 2 a 1,4-benzosemiquinone + NAD(+). It carries out the reaction N,N-dimethyl-1,4-phenylenediamine + anthranilate + 2 NAD(+) = 2-(4-dimethylaminophenyl)diazenylbenzoate + 2 NADH + 2 H(+). Its function is as follows. Quinone reductase that provides resistance to thiol-specific stress caused by electrophilic quinones. Functionally, also exhibits azoreductase activity. Catalyzes the reductive cleavage of the azo bond in aromatic azo compounds to the corresponding amines. This Shouchella clausii (strain KSM-K16) (Alkalihalobacillus clausii) protein is FMN-dependent NADH:quinone oxidoreductase.